A 505-amino-acid chain; its full sequence is Alpha-ketoglutarate-dependent dioxygenase FTO (505 aa).

A Phosphothreonine modification is found at threonine 4. The interval 32 to 327 (TPKDDEFYQQ…SSTHRVAECS (296 aa)) is fe2OG dioxygenase domain. Residues arginine 96 and tyrosine 108 each coordinate substrate. Asparagine 205 serves as a coordination point for 2-oxoglutarate. The interval 213-224 (PYLKEEPYFGMG) is loop L1; predicted to block binding of double-stranded DNA or RNA. The residue at position 216 (lysine 216) is an N6-acetyllysine. Residues histidine 231 and aspartate 233 each contribute to the Fe cation site. 231–234 (HHDE) lines the substrate pocket. Residue tyrosine 295 participates in 2-oxoglutarate binding. A Fe cation-binding site is contributed by histidine 307. 2-oxoglutarate-binding positions include 316–318 (RFS), threonine 320, and arginine 322.

This sequence belongs to the fto family. Monomer. May also exist as homodimer. The cofactor is Fe(2+).

Its subcellular location is the nucleus. It localises to the nucleus speckle. The protein resides in the cytoplasm. It carries out the reaction a 5'-end (N(7)-methyl 5'-triphosphoguanosine)-(N(6),2'-O-dimethyladenosine) in mRNA + 2-oxoglutarate + O2 = a 5'-end (N(7)-methyl 5'-triphosphoguanosine)-(2'-O-methyladenosine) in mRNA + formaldehyde + succinate + CO2. The catalysed reaction is an N(6)-methyladenosine in mRNA + 2-oxoglutarate + O2 = an adenosine in mRNA + formaldehyde + succinate + CO2. It catalyses the reaction N(6)-methyladenosine in U6 snRNA + 2-oxoglutarate + O2 = adenosine in U6 snRNA + formaldehyde + succinate + CO2. The enzyme catalyses a 5'-end (N(7)-methyl 5'-triphosphoguanosine)-(N(6),2'-O-dimethyladenosine) in U6 snRNA + 2-oxoglutarate + O2 = a 5'-end (N(7)-methyl 5'-triphosphoguanosine)-(2'-O-methyladenosine) in U6 snRNA + formaldehyde + succinate + CO2. It carries out the reaction an N(1)-methyladenosine in tRNA + 2-oxoglutarate + O2 = an adenosine in tRNA + formaldehyde + succinate + CO2. Activated by ascorbate. Inhibited by N-oxalylglycine, fumarate and succinate. Functionally, RNA demethylase that mediates oxidative demethylation of different RNA species, such as mRNAs, tRNAs and snRNAs, and acts as a regulator of fat mass, adipogenesis and energy homeostasis. Specifically demethylates N(6)-methyladenosine (m6A) RNA, the most prevalent internal modification of messenger RNA (mRNA) in higher eukaryotes. M6A demethylation by FTO affects mRNA expression and stability. Also able to demethylate m6A in U6 small nuclear RNA (snRNA). Mediates demethylation of N(6),2'-O-dimethyladenosine cap (m6A(m)), by demethylating the N(6)-methyladenosine at the second transcribed position of mRNAs and U6 snRNA. Demethylation of m6A(m) in the 5'-cap by FTO affects mRNA stability by promoting susceptibility to decapping. Also acts as a tRNA demethylase by removing N(1)-methyladenine from various tRNAs. Has no activity towards 1-methylguanine. Has no detectable activity towards double-stranded DNA. Also able to repair alkylated DNA and RNA by oxidative demethylation: demethylates single-stranded RNA containing 3-methyluracil, single-stranded DNA containing 3-methylthymine and has low demethylase activity towards single-stranded DNA containing 1-methyladenine or 3-methylcytosine. Ability to repair alkylated DNA and RNA is however unsure in vivo. Involved in the regulation of fat mass, adipogenesis and body weight, thereby contributing to the regulation of body size and body fat accumulation. Involved in the regulation of thermogenesis and the control of adipocyte differentiation into brown or white fat cells. Regulates activity of the dopaminergic midbrain circuitry via its ability to demethylate m6A in mRNAs. The chain is Alpha-ketoglutarate-dependent dioxygenase FTO from Pongo abelii (Sumatran orangutan).